Reading from the N-terminus, the 153-residue chain is Large ribosomal subunit protein uL22 (153 aa).

It belongs to the universal ribosomal protein uL22 family. Part of the 50S ribosomal subunit.

This protein binds specifically to 23S rRNA. It makes multiple contacts with different domains of the 23S rRNA in the assembled 50S subunit and ribosome. Its function is as follows. The globular domain of the protein is located near the polypeptide exit tunnel on the outside of the subunit, while an extended beta-hairpin is found that lines the wall of the exit tunnel in the center of the 70S ribosome. In Methanocella arvoryzae (strain DSM 22066 / NBRC 105507 / MRE50), this protein is Large ribosomal subunit protein uL22.